Here is an 807-residue protein sequence, read N- to C-terminus: Putative AC transposase (807 aa).

2 disordered regions span residues 42 to 140 (GLKR…KKCT) and 785 to 807 (MDED…GSSP). Residues 84-98 (QSVSSSNANGTATDP) show a composition bias toward polar residues. 10 repeat units span residues 109-110 (PQ), 111-112 (PQ), 113-114 (PQ), 115-116 (PQ), 117-118 (PE), 119-120 (PQ), 121-122 (PQ), 123-124 (PQ), 125-126 (PE), and 127-128 (PE). The tract at residues 109-128 (PQPQPQPQPEPQPQPQPEPE) is 10 X 2 AA tandem repeats of P-[QE]. Positions 110–125 (QPQPQPQPEPQPQPQP) are enriched in pro residues.

In Zea mays (Maize), this protein is Putative AC transposase.